Here is a 288-residue protein sequence, read N- to C-terminus: Proteasome subunit beta (288 aa).

A propeptide spans 1 to 57 (MTVDGQVGRWPVSAIPAAYMRPGSGSFTEFLAGAEPHLLPGRAGAQPAGAAPAVPHG) (removed in mature form; by autocatalysis). Thr-58 acts as the Nucleophile in catalysis.

This sequence belongs to the peptidase T1B family. The 20S proteasome core is composed of 14 alpha and 14 beta subunits that assemble into four stacked heptameric rings, resulting in a barrel-shaped structure. The two inner rings, each composed of seven catalytic beta subunits, are sandwiched by two outer rings, each composed of seven alpha subunits. The catalytic chamber with the active sites is on the inside of the barrel. Has a gated structure, the ends of the cylinder being occluded by the N-termini of the alpha-subunits. Is capped by the proteasome-associated ATPase, ARC.

It is found in the cytoplasm. It catalyses the reaction Cleavage of peptide bonds with very broad specificity.. It participates in protein degradation; proteasomal Pup-dependent pathway. Its activity is regulated as follows. The formation of the proteasomal ATPase ARC-20S proteasome complex, likely via the docking of the C-termini of ARC into the intersubunit pockets in the alpha-rings, may trigger opening of the gate for substrate entry. Interconversion between the open-gate and close-gate conformations leads to a dynamic regulation of the 20S proteasome proteolysis activity. Functionally, component of the proteasome core, a large protease complex with broad specificity involved in protein degradation. In Nakamurella multipartita (strain ATCC 700099 / DSM 44233 / CIP 104796 / JCM 9543 / NBRC 105858 / Y-104) (Microsphaera multipartita), this protein is Proteasome subunit beta.